Reading from the N-terminus, the 317-residue chain is Lactamase-like protein adaB (317 aa).

His-97, His-99, Asp-101, and His-102 together coordinate Zn(2+). Asp-101 (proton donor/acceptor) is an active-site residue.

The protein belongs to the metallo-beta-lactamase superfamily. Requires Zn(2+) as cofactor.

The enzyme catalyses 3-(2,4-dioxopentyl)-2,3,6,8,9-pentahydroxy-1-oxo-1,2,3,4-tetrahydroanthracene-2-carboxyl-[ACP] = 2-acetyl-3,4a,8,10,11,12a-hexahydroxy-1,4,4a,5,12,12a-hexahydrotetracene-1,12-dione + holo-[ACP] + H(+). Its pathway is secondary metabolite biosynthesis. Lactamase-like protein; part of the gene cluster that mediates the biosynthesis of the linear tetracyclic TAN-1612 neuropeptide Y receptor antagonist. The decaketide backbone of TAN-1612 is synthesized by the non-reducing polyketide synthase adaA via condensation of one acetyl-CoA starter unit with 9 malonyl-CoA units. The FAD-dependent monooxygenase adaC then performs hydroxylation at C2 while the polaketide chain is still attached to the NRPKS adaA. The alpha-hydroxylation step at C2 appears to be crucial for the following C18-C1 Claisen cyclization and release of the C9-hydroxyl version of TAN-1612 from the NRPKS adaA, two steps performed by the lactamase-like protein adaB. Finally, the O-methyltransferase adaD performs the C9 O-methylation to complete the biosynthesis of TAN-1612. The polypeptide is Lactamase-like protein adaB (Aspergillus niger (strain ATCC MYA-4892 / CBS 513.88 / FGSC A1513)).